The sequence spans 336 residues: Geranylgeranyl pyrophosphate synthase 6, mitochondrial (336 aa).

The N-terminal 22 residues, 1 to 22 (MRPRYSLILSAMRLIRPSNRRL), are a transit peptide targeting the mitochondrion. Isopentenyl diphosphate is bound by residues K80, R83, and H112. Mg(2+)-binding residues include D119 and D125. Dimethylallyl diphosphate is bound at residue R130. R131 is an isopentenyl diphosphate binding site. Dimethylallyl diphosphate is bound by residues K221, T222, Q259, K276, and K286.

This sequence belongs to the FPP/GGPP synthase family. In terms of assembly, monomer. Requires Mg(2+) as cofactor.

It is found in the mitochondrion. It catalyses the reaction isopentenyl diphosphate + dimethylallyl diphosphate = (2E)-geranyl diphosphate + diphosphate. It carries out the reaction isopentenyl diphosphate + (2E)-geranyl diphosphate = (2E,6E)-farnesyl diphosphate + diphosphate. The enzyme catalyses isopentenyl diphosphate + (2E,6E)-farnesyl diphosphate = (2E,6E,10E)-geranylgeranyl diphosphate + diphosphate. It functions in the pathway isoprenoid biosynthesis; farnesyl diphosphate biosynthesis; farnesyl diphosphate from geranyl diphosphate and isopentenyl diphosphate: step 1/1. It participates in isoprenoid biosynthesis; geranyl diphosphate biosynthesis; geranyl diphosphate from dimethylallyl diphosphate and isopentenyl diphosphate: step 1/1. The protein operates within isoprenoid biosynthesis; geranylgeranyl diphosphate biosynthesis; geranylgeranyl diphosphate from farnesyl diphosphate and isopentenyl diphosphate: step 1/1. Catalyzes the trans-addition of the three molecules of IPP onto DMAPP to form geranylgeranyl pyrophosphate. In Arabidopsis thaliana (Mouse-ear cress), this protein is Geranylgeranyl pyrophosphate synthase 6, mitochondrial.